The sequence spans 362 residues: Glutamate--cysteine ligase (362 aa).

It belongs to the glutamate--cysteine ligase type 2 family. YbdK subfamily.

It carries out the reaction L-cysteine + L-glutamate + ATP = gamma-L-glutamyl-L-cysteine + ADP + phosphate + H(+). In terms of biological role, catalyzes the synthesis of gamma-glutamylcysteine (gamma-GC), the main low-molecular-weight thiol compound instead of glutathione in halophilic archaea. This Natronomonas pharaonis (strain ATCC 35678 / DSM 2160 / CIP 103997 / JCM 8858 / NBRC 14720 / NCIMB 2260 / Gabara) (Halobacterium pharaonis) protein is Glutamate--cysteine ligase.